We begin with the raw amino-acid sequence, 471 residues long: Tryptophanase (471 aa).

Residues Lys-5, Lys-115, and Lys-156 each carry the N6-acetyllysine modification. Lys-270 is subject to N6-(pyridoxal phosphate)lysine. The residue at position 450 (Lys-450) is an N6-acetyllysine.

It belongs to the beta-eliminating lyase family. In terms of assembly, homotetramer. The cofactor is pyridoxal 5'-phosphate.

The enzyme catalyses L-tryptophan + H2O = indole + pyruvate + NH4(+). It participates in amino-acid degradation; L-tryptophan degradation via pyruvate pathway; indole and pyruvate from L-tryptophan: step 1/1. This Shigella boydii serotype 18 (strain CDC 3083-94 / BS512) protein is Tryptophanase.